A 177-amino-acid polypeptide reads, in one-letter code: MAKTTRSTGTKTQDEIKADGLKEKMISVNRVTKVVKGGRILGFAALTVVGDGKGGIGMGKGKSREVPLAVQKAMDEARRGMIKINLINGTLHHPIIGRHGAARVYMQPASEGTGIIAGGPMRAIFEVMGVHNILAKCLGSTNPYNIVRATLNGLDKIQTPAMIAAKRGKSIDEITGA.

Positions 21–84 (LKEKMISVNR…DEARRGMIKI (64 aa)) constitute an S5 DRBM domain.

This sequence belongs to the universal ribosomal protein uS5 family. In terms of assembly, part of the 30S ribosomal subunit. Contacts proteins S4 and S8.

Its function is as follows. With S4 and S12 plays an important role in translational accuracy. In terms of biological role, located at the back of the 30S subunit body where it stabilizes the conformation of the head with respect to the body. In Nitrosomonas eutropha (strain DSM 101675 / C91 / Nm57), this protein is Small ribosomal subunit protein uS5.